A 934-amino-acid chain; its full sequence is MVPEAWRSGLVSTGRVVGVLLLLGALNKASTVIHYEIPEEREKGFAVGNVVANLGLDLGSLSARRFRVVSGASRRFFEVNRETGEMFVNDRLDREELCGTLPSCTVTLELVVENPLELFSVEVVIQDINDNNPAFPTQEMKLEISEAVAPGTRFPLESAHDPDVGSNSLQTYELSRNEYFALRVQTREDSTKYAELVLERALDREREPSLQLVLTALDGGTPALSASLPIHIKVLDANDNAPVFNQSLYRARVLEDAPSGTRVVQVLATDLDEGPNGEIIYSFGSHNRAGVRELFALDLVTGMLTIKGRLDFEDTKLHEIYIQAKDKGANPEGAHCKVLVEVVDVNDNAPEITVTSVYSPVPEDAPLGTVIALLSVTDLDAGENGLVTCEVPPGLPFSLTSSLKNYFTLKTSADLDRETVPEYNLSITARDAGTPSLSALTIVRVQVSDINDNPPQSSQSSYDVYIEENNLPGAPILNLSVWDPDAPQNARLSFFLLEQGAETGLVGRYFTINRDNGIVSSLVPLDYEDRREFELTAHISDGGTPVLATNISVNIFVTDRNDNAPQVLYPRPGGSSVEMLPRGTSAGHLVSRVVGWDADAGHNAWLSYSLLGSPNQSLFAIGLHTGQISTARPVQDTDSPRQTLTVLIKDNGEPSLSTTATLTVSVTEDSPEARAEFPSGSAPREQNKNLTFYLLLSLILVSVGFVVTVFGVIIFKVYKWKQSRDLYRAPVSSLYRTPGPSLHADAVRGGLMSPHLYHQVYLTTDSRRSDPLLKKPGAASPLASRQNTLRSCDPVFYRQVLGAESAPPGQQAPPNTDWRFSQAQRPGTSGSQNGDDTGTWPNNQFDTEMLQAMILASASEAADGSSTLGGGAGTMGLSARYGPQFTLQHVPDYRQNVYIPGSNATLTNAAGKRDGKAPAGGNGNKKKSGKKEKK.

A signal peptide spans 1 to 31; it reads MVPEAWRSGLVSTGRVVGVLLLLGALNKAST. Cadherin domains follow at residues 32-135, 136-244, 245-352, 353-457, 458-567, and 572-685; these read VIHY…NPAF, PTQE…APVF, NQSL…APEI, TVTS…PPQS, SQSS…APQV, and PGGS…APRE. Topologically, residues 32–693 are extracellular; it reads VIHYEIPEER…REQNKNLTFY (662 aa). N-linked (GlcNAc...) asparagine glycosylation is found at N245, N424, N478, N550, N615, and N689. Residues 694 to 714 form a helical membrane-spanning segment; that stretch reads LLLSLILVSVGFVVTVFGVII. Residues 715–934 lie on the Cytoplasmic side of the membrane; that stretch reads FKVYKWKQSR…KKKSGKKEKK (220 aa). Disordered stretches follow at residues 804-843 and 904-934; these read ESAP…WPNN and ATLT…KEKK. Over residues 812 to 843 the composition is skewed to polar residues; the sequence is APPNTDWRFSQAQRPGTSGSQNGDDTGTWPNN. The span at 924–934 shows a compositional bias: basic residues; it reads NKKKSGKKEKK.

The protein localises to the cell membrane. Its function is as follows. Potential calcium-dependent cell-adhesion protein. May be involved in the establishment and maintenance of specific neuronal connections in the brain. The protein is Protocadherin gamma-C3 (PCDHGC3) of Pan troglodytes (Chimpanzee).